The sequence spans 411 residues: Corticotropin-releasing factor receptor 2 (411 aa).

The not cleaved signal peptide spans 1–19 (MDAALLHSLLEANCSLALA). Over 1-108 (MDAALLHSLL…EPILDDKQRK (108 aa)) the chain is Extracellular. N-linked (GlcNAc...) asparagine glycans are attached at residues asparagine 13, asparagine 41, asparagine 74, asparagine 86, and asparagine 94. 4 disulfide bridges follow: cysteine 14–cysteine 50, cysteine 40–cysteine 83, tryptophan 51–arginine 77, and cysteine 64–cysteine 98. The chain crosses the membrane as a helical span at residues 109 to 139 (YDLHYRIALVVNYLGHCVSVAALVAAFLLFL). Over 140–146 (ALRSIRC) the chain is Cytoplasmic. The helical transmembrane segment at 147–171 (LRNVIHWNLITTFILRNVMWFLLQL) threads the bilayer. Residues 172 to 185 (VDHEVHESNEVWCR) are Extracellular-facing. Cysteine 184 and cysteine 254 are oxidised to a cystine. Residues 186–214 (CITTIFNYFVVTNFFWMFVEGCYLHTAIV) traverse the membrane as a helical segment. Topologically, residues 215 to 221 (MTYSTER) are cytoplasmic. A helical transmembrane segment spans residues 222 to 249 (LRKCLFLFIGWCIPFPIIVAWAIGKLYY). Residues 250–265 (ENEQCWFGKEPGDLVD) lie on the Extracellular side of the membrane. Residues 266 to 291 (YIYQGPIILVLLINFVFLFNIVRILM) form a helical membrane-spanning segment. Over 292 to 302 (TKLRASTTSET) the chain is Cytoplasmic. The chain crosses the membrane as a helical span at residues 303–327 (IQYRKAVKATLVLLPLLGITYMLFF). Residues 328 to 334 (VNPGEDD) are Extracellular-facing. Residues 335–364 (LSQIMFIYFNSFLQSFQGFFVSVFYCFFNG) traverse the membrane as a helical segment. Over 365–411 (EVRSAVRKRWHRWQDHHSLRVPMARAMSIPTSPTRISFHSIKQTAAV) the chain is Cytoplasmic.

This sequence belongs to the G-protein coupled receptor 2 family. As to quaternary structure, monomer. Interacts (via N-terminal extracellular domain) with CRF, UCN, UCN2 and UCN3. Has highest affinity for UCN, and considerably lower affinity for CRF, UNC2 and UCN3. An N-glycosylation site within the signal peptide impedes its proper cleavage and function.

The protein resides in the cell membrane. In terms of biological role, G-protein coupled receptor for CRH (corticotropin-releasing factor), UCN (urocortin), UCN2 and UCN3. Has high affinity for UCN. Ligand binding causes a conformation change that triggers signaling via guanine nucleotide-binding proteins (G proteins) and down-stream effectors, such as adenylate cyclase. Promotes the activation of adenylate cyclase, leading to increased intracellular cAMP levels. The protein is Corticotropin-releasing factor receptor 2 (CRHR2) of Homo sapiens (Human).